We begin with the raw amino-acid sequence, 211 residues long: UPF0637 protein Bsph_1379 (211 aa).

Belongs to the UPF0637 family.

In Lysinibacillus sphaericus (strain C3-41), this protein is UPF0637 protein Bsph_1379.